The primary structure comprises 32 residues: ilv operon leader peptide (32 aa).

The sequence is that of ilv operon leader peptide (ilvL) from Escherichia coli O157:H7.